The chain runs to 654 residues: Dystrobrevin beta (654 aa).

Residue methionine 1 is modified to N-acetylmethionine. Phosphothreonine occurs at positions 11, 69, 179, and 212. The ZZ-type zinc-finger motif lies at 238–294 (FHPVECSYCHCESMMGFRYRCQQCHNYQLCQNCFWRGHAGGPHSNQHQMKELSSWKS). Zn(2+) contacts are provided by cysteine 243, cysteine 246, cysteine 258, cysteine 261, cysteine 267, cysteine 270, histidine 280, and histidine 284. Serine 394 bears the Phosphoserine mark. The tract at residues 399–448 (DEEHRLIARYAARLAAEAGNMTRPPTDASFNFDANKQQRQLIAELENKNR) is syntrophin-binding region. Threonine 424 bears the Phosphothreonine mark. A coiled-coil region spans residues 429 to 519 (NFDANKQQRQ…LEGLMKLLKA (91 aa)). Residues 520-562 (QATGSPHTSPTHGGGRSMPMPVRSTSAGSTPTHGPQDSLSGVG) form a disordered region. Composition is skewed to polar residues over residues 521 to 530 (ATGSPHTSPT) and 542 to 558 (RSTSAGSTPTHGPQDSL).

This sequence belongs to the dystrophin family. Dystrobrevin subfamily. As to quaternary structure, interacts with dystrophin short form DP71 and syntrophins SNTG1 and SNTG2. Binds DTNBP1. Forms a specific complex composed of DMD, SNTB2 and SNTA1 in neuron; the interaction with SNTB2 and SNTA1 is DMD independent. Interacts with UTRN and dystrophin short form DP71 in the kidney and liver. Interacts with SNTB1, SNTB2 and SNTA1 in kidney and liver. Interacts with KIF5A. Interacts with HMG20A and HMG20B. Interacts with OLFM1. Interacts with PRKAR2B and PRKAR1A. Phosphorylated by PKA. Phosphorylation at Thr-11 alters the interaction with KIF5A. As to expression, expressed in neurons. In the isocortex, expressed most prominently in the somata (including the nuclei) and the dendrites of the pyramidal cells. Expressed in the hippocampus CA1, CA2, and CA3 neurons, namely in the initial segments of dendrites. Expressed in the Purkinje cells, molecular layer interneurons, and granule cells of cerebellum. Expressed in axon fascicles associated with the spinal trigeminal tract and in the internal capsule in the brainstem.

Its subcellular location is the cytoplasm. The protein resides in the postsynaptic density. It is found in the cell projection. It localises to the dendrite. The protein localises to the basal cell membrane. Its subcellular location is the postsynapse. The protein resides in the nucleus. Functionally, scaffolding protein that assembles DMD and SNTA1 molecules to the basal membrane of kidney cells and liver sinusoids. May function as a repressor of the SYN1 promoter through the binding of repressor element-1 (RE-1), in turn regulates SYN1 expression and may be involved in cell proliferation regulation during the early phase of neural differentiation. May be required for proper maturation and function of a subset of inhibitory synapses. The polypeptide is Dystrobrevin beta (Rattus norvegicus (Rat)).